The chain runs to 480 residues: Glucosylglycerol phosphorylase (480 aa).

Catalysis depends on Asp190, which acts as the Nucleophile. Residue Tyr194 participates in substrate binding. Glu231 functions as the Proton donor in the catalytic mechanism. A substrate-binding site is contributed by Gln336.

The protein belongs to the glycosyl hydrolase 13 family. Sucrose phosphorylase subfamily.

The catalysed reaction is 2-O-(alpha-D-glucopyranosyl)glycerol + phosphate = alpha-D-glucose 1-phosphate + glycerol. In terms of biological role, catalyzes the reversible phosphorolysis of 2-O-alpha-D-glucosylglycerol with retention of the anomeric configuration, forming alpha-D-glucose 1-phosphate and glycerol. Has most likely a catabolic role, either regulating the intracellular levels of glucosylglycerol, which acts as a compatible solute, or degrading it when the environmental conditions change. Cannot catalyze the phosphorolysis of sucrose or glucosylglycerate. This is Glucosylglycerol phosphorylase from Marinobacter adhaerens (strain DSM 23420 / HP15).